Here is a 147-residue protein sequence, read N- to C-terminus: uncharacterized protein (147 aa).

One can recognise an N-acetyltransferase domain in the interval 1–147 (MEIRRADKDD…RPESGGSGSE (147 aa)).

It belongs to the acetyltransferase family.

This is an uncharacterized protein from Archaeoglobus fulgidus (strain ATCC 49558 / DSM 4304 / JCM 9628 / NBRC 100126 / VC-16).